The primary structure comprises 87 residues: UPF0297 protein Sca_1229 (87 aa).

The protein belongs to the UPF0297 family.

This chain is UPF0297 protein Sca_1229, found in Staphylococcus carnosus (strain TM300).